The following is a 304-amino-acid chain: Large ribosomal subunit protein uL2m (304 aa).

A mitochondrion-targeting transit peptide spans 1–60 (MALCALASALRSLSLASPAITARVPTLLPVGQSNVLLQLPSALALPAHRPVHMSADRSAK).

The protein belongs to the universal ribosomal protein uL2 family. In terms of assembly, component of the mitochondrial ribosome large subunit (39S) which comprises a 16S rRNA and about 50 distinct proteins.

The protein resides in the mitochondrion. In Rattus norvegicus (Rat), this protein is Large ribosomal subunit protein uL2m (Mrpl2).